The sequence spans 448 residues: Probable ribonuclease FAU-1 (448 aa).

This sequence belongs to the FAU-1 family.

In terms of biological role, probable RNase involved in rRNA stability through maturation and/or degradation of precursor rRNAs. Binds to RNA in loop regions with AU-rich sequences. This chain is Probable ribonuclease FAU-1, found in Pyrobaculum calidifontis (strain DSM 21063 / JCM 11548 / VA1).